We begin with the raw amino-acid sequence, 345 residues long: S-adenosylmethionine:tRNA ribosyltransferase-isomerase (345 aa).

Belongs to the QueA family. In terms of assembly, monomer.

The protein localises to the cytoplasm. The enzyme catalyses 7-aminomethyl-7-carbaguanosine(34) in tRNA + S-adenosyl-L-methionine = epoxyqueuosine(34) in tRNA + adenine + L-methionine + 2 H(+). The protein operates within tRNA modification; tRNA-queuosine biosynthesis. Transfers and isomerizes the ribose moiety from AdoMet to the 7-aminomethyl group of 7-deazaguanine (preQ1-tRNA) to give epoxyqueuosine (oQ-tRNA). The protein is S-adenosylmethionine:tRNA ribosyltransferase-isomerase of Acinetobacter baumannii (strain AB0057).